Consider the following 498-residue polypeptide: ATP synthase subunit beta, chloroplastic (498 aa).

Gly-172 to Thr-179 contacts ATP.

This sequence belongs to the ATPase alpha/beta chains family. As to quaternary structure, F-type ATPases have 2 components, CF(1) - the catalytic core - and CF(0) - the membrane proton channel. CF(1) has five subunits: alpha(3), beta(3), gamma(1), delta(1), epsilon(1). CF(0) has four main subunits: a(1), b(1), b'(1) and c(9-12).

Its subcellular location is the plastid. It localises to the chloroplast thylakoid membrane. The catalysed reaction is ATP + H2O + 4 H(+)(in) = ADP + phosphate + 5 H(+)(out). Its function is as follows. Produces ATP from ADP in the presence of a proton gradient across the membrane. The catalytic sites are hosted primarily by the beta subunits. This is ATP synthase subunit beta, chloroplastic from Phormium tenax (New Zealand flax).